A 201-amino-acid polypeptide reads, in one-letter code: Lipopolysaccharide core heptose(II)-phosphate phosphatase (201 aa).

The N-terminal stretch at 1–35 is a signal peptide; sequence MLAFTLRFIKNKRYLATLAGALVIIAGLTSQHAWS.

This sequence belongs to the phosphoglycerate mutase family. Ais subfamily.

It is found in the periplasm. The protein operates within bacterial outer membrane biogenesis; lipopolysaccharide metabolism. Catalyzes the dephosphorylation of heptose(II) of the outer membrane lipopolysaccharide core. The polypeptide is Lipopolysaccharide core heptose(II)-phosphate phosphatase (Salmonella schwarzengrund (strain CVM19633)).